A 394-amino-acid chain; its full sequence is Elongation factor Tu 1 (394 aa).

The 195-residue stretch at 10–204 (KPHVNVGTIG…ALDSYIPEPE (195 aa)) folds into the tr-type G domain. The G1 stretch occupies residues 19-26 (GHVDHGKT). 19–26 (GHVDHGKT) is a binding site for GTP. Thr-26 contributes to the Mg(2+) binding site. The tract at residues 60 to 64 (GITIN) is G2. A G3 region spans residues 81-84 (DCPG). GTP-binding positions include 81–85 (DCPGH) and 136–139 (NKCD). The interval 136 to 139 (NKCD) is G4. The tract at residues 174–176 (SAL) is G5.

It belongs to the TRAFAC class translation factor GTPase superfamily. Classic translation factor GTPase family. EF-Tu/EF-1A subfamily. As to quaternary structure, monomer.

The protein localises to the cytoplasm. The enzyme catalyses GTP + H2O = GDP + phosphate + H(+). GTP hydrolase that promotes the GTP-dependent binding of aminoacyl-tRNA to the A-site of ribosomes during protein biosynthesis. In Shewanella sp. (strain MR-4), this protein is Elongation factor Tu 1.